Consider the following 279-residue polypeptide: 2'-N-acetylparomamine deacetylase (279 aa).

Zn(2+) contacts are provided by His31, Asp34, and His157. The tract at residues 245-279 (PRRWTGGTAGAGHAAGRRGAPHTERVWTPAPAGAR) is disordered. Low complexity predominate over residues 246-258 (RRWTGGTAGAGHA).

It belongs to the PIGL family. Zn(2+) is required as a cofactor.

The catalysed reaction is 2'-N-acetylparomamine + H2O = paromamine + acetate. The enzyme catalyses 2'''-acetyl-6'''-hydroxyneomycin C + H2O = 6'''-deamino-6'''-hydroxyneomycin C + acetate. It functions in the pathway antibiotic biosynthesis; neomycin biosynthesis. Its function is as follows. Deacetylase involved in the biosynthesis of neomycin by mediating 2 steps of the pathway. Deacetylates both 2'-N-acetylparomamine and 2'''-acetyl-6'''-hydroxyneomycin C. The sequence is that of 2'-N-acetylparomamine deacetylase (neoL) from Streptomyces fradiae (Streptomyces roseoflavus).